Consider the following 333-residue polypeptide: Ornithine carbamoyltransferase (333 aa).

Carbamoyl phosphate-binding positions include 56–59, Q83, R107, and 134–137; these read STRT and HPTQ. L-ornithine-binding positions include N167, D231, and 235-236; that span reads SM. Carbamoyl phosphate contacts are provided by residues 273-274 and R318; that span reads CL.

The protein belongs to the aspartate/ornithine carbamoyltransferase superfamily. OTCase family.

Its subcellular location is the cytoplasm. The catalysed reaction is carbamoyl phosphate + L-ornithine = L-citrulline + phosphate + H(+). Its pathway is amino-acid biosynthesis; L-arginine biosynthesis; L-arginine from L-ornithine and carbamoyl phosphate: step 1/3. In terms of biological role, reversibly catalyzes the transfer of the carbamoyl group from carbamoyl phosphate (CP) to the N(epsilon) atom of ornithine (ORN) to produce L-citrulline. This chain is Ornithine carbamoyltransferase, found in Staphylococcus aureus (strain MSSA476).